The primary structure comprises 143 residues: Hemoglobin subunit alpha (143 aa).

Ser-2 bears the N-acetylserine mark. The 142-residue stretch at 2 to 143 folds into the Globin domain; the sequence is SLSDTDKAVV…LALALSEKYR (142 aa). His-60 serves as a coordination point for O2. A heme b-binding site is contributed by His-89.

The protein belongs to the globin family. As to quaternary structure, heterotetramer of two alpha chains and two beta chains. As to expression, red blood cells.

Its function is as follows. Involved in oxygen transport from gills to the various peripheral tissues. This is Hemoglobin subunit alpha (hbaa1) from Danio rerio (Zebrafish).